We begin with the raw amino-acid sequence, 251 residues long: DNA repair protein RecO (251 aa).

This sequence belongs to the RecO family.

Involved in DNA repair and RecF pathway recombination. The protein is DNA repair protein RecO of Macrococcus caseolyticus (strain JCSC5402) (Macrococcoides caseolyticum).